A 154-amino-acid chain; its full sequence is Aspartate carbamoyltransferase regulatory chain (154 aa).

Positions 110, 115, 136, and 139 each coordinate Zn(2+).

Belongs to the PyrI family. In terms of assembly, contains catalytic and regulatory chains. Zn(2+) is required as a cofactor.

Involved in allosteric regulation of aspartate carbamoyltransferase. In Halobacterium salinarum (strain ATCC 700922 / JCM 11081 / NRC-1) (Halobacterium halobium), this protein is Aspartate carbamoyltransferase regulatory chain.